Here is a 137-residue protein sequence, read N- to C-terminus: ATP synthase epsilon chain, chloroplastic (137 aa).

The protein belongs to the ATPase epsilon chain family. In terms of assembly, F-type ATPases have 2 components, CF(1) - the catalytic core - and CF(0) - the membrane proton channel. CF(1) has five subunits: alpha(3), beta(3), gamma(1), delta(1), epsilon(1). CF(0) has three main subunits: a, b and c.

The protein resides in the plastid. It is found in the chloroplast thylakoid membrane. Functionally, produces ATP from ADP in the presence of a proton gradient across the membrane. The protein is ATP synthase epsilon chain, chloroplastic of Oryza nivara (Indian wild rice).